The following is a 122-amino-acid chain: Fluoride-specific ion channel FluC (122 aa).

4 consecutive transmembrane segments (helical) span residues 1-21 (MYAF…RHYL), 35-55 (WAIL…SAYL), 67-87 (FLLT…LNLI), and 98-118 (FLNL…GFWL). G74 and T77 together coordinate Na(+).

It belongs to the fluoride channel Fluc/FEX (TC 1.A.43) family.

Its subcellular location is the cell inner membrane. It catalyses the reaction fluoride(in) = fluoride(out). Its activity is regulated as follows. Na(+) is not transported, but it plays an essential structural role and its presence is essential for fluoride channel function. Functionally, fluoride-specific ion channel. Important for reducing fluoride concentration in the cell, thus reducing its toxicity. The protein is Fluoride-specific ion channel FluC of Dichelobacter nodosus (strain VCS1703A).